The primary structure comprises 253 residues: Ubiquinone/menaquinone biosynthesis C-methyltransferase UbiE (253 aa).

S-adenosyl-L-methionine is bound by residues T76, D97, 125–126, and S142; that span reads NA.

The protein belongs to the class I-like SAM-binding methyltransferase superfamily. MenG/UbiE family.

It carries out the reaction a 2-demethylmenaquinol + S-adenosyl-L-methionine = a menaquinol + S-adenosyl-L-homocysteine + H(+). It catalyses the reaction a 2-methoxy-6-(all-trans-polyprenyl)benzene-1,4-diol + S-adenosyl-L-methionine = a 5-methoxy-2-methyl-3-(all-trans-polyprenyl)benzene-1,4-diol + S-adenosyl-L-homocysteine + H(+). The protein operates within quinol/quinone metabolism; menaquinone biosynthesis; menaquinol from 1,4-dihydroxy-2-naphthoate: step 2/2. Its pathway is cofactor biosynthesis; ubiquinone biosynthesis. Its function is as follows. Methyltransferase required for the conversion of demethylmenaquinol (DMKH2) to menaquinol (MKH2) and the conversion of 2-polyprenyl-6-methoxy-1,4-benzoquinol (DDMQH2) to 2-polyprenyl-3-methyl-6-methoxy-1,4-benzoquinol (DMQH2). This chain is Ubiquinone/menaquinone biosynthesis C-methyltransferase UbiE, found in Xanthomonas campestris pv. campestris (strain ATCC 33913 / DSM 3586 / NCPPB 528 / LMG 568 / P 25).